Here is a 288-residue protein sequence, read N- to C-terminus: ATP synthase gamma chain (288 aa).

Belongs to the ATPase gamma chain family. F-type ATPases have 2 components, CF(1) - the catalytic core - and CF(0) - the membrane proton channel. CF(1) has five subunits: alpha(3), beta(3), gamma(1), delta(1), epsilon(1). CF(0) has three main subunits: a, b and c.

The protein resides in the cell inner membrane. Functionally, produces ATP from ADP in the presence of a proton gradient across the membrane. The gamma chain is believed to be important in regulating ATPase activity and the flow of protons through the CF(0) complex. In Actinobacillus pleuropneumoniae serotype 5b (strain L20), this protein is ATP synthase gamma chain.